The sequence spans 307 residues: Ribosomal RNA small subunit methyltransferase H (307 aa).

Residues 31–33, D51, Y83, D97, and Q104 each bind S-adenosyl-L-methionine; that span reads GGH.

Belongs to the methyltransferase superfamily. RsmH family.

The protein localises to the cytoplasm. The catalysed reaction is cytidine(1402) in 16S rRNA + S-adenosyl-L-methionine = N(4)-methylcytidine(1402) in 16S rRNA + S-adenosyl-L-homocysteine + H(+). In terms of biological role, specifically methylates the N4 position of cytidine in position 1402 (C1402) of 16S rRNA. In Buchnera aphidicola subsp. Cinara cedri (strain Cc), this protein is Ribosomal RNA small subunit methyltransferase H.